Here is a 172-residue protein sequence, read N- to C-terminus: MGYEEIKNTIATIEDFPKKGISFKDITPLLLDHKKMNFIIDELAKFAKTIDFDIIVAPESRGFLFGLPLALNLKKPFVPIRKKGKLPREVISQEYELEYGKATIEVTKNDIPANSKVLIIDDLIATGGTTVAIQDLVTKLGSTVVGQAYLIELVGLCDYEKLQGKFFSMIKY.

This sequence belongs to the purine/pyrimidine phosphoribosyltransferase family. As to quaternary structure, homodimer.

It localises to the cytoplasm. It catalyses the reaction AMP + diphosphate = 5-phospho-alpha-D-ribose 1-diphosphate + adenine. It participates in purine metabolism; AMP biosynthesis via salvage pathway; AMP from adenine: step 1/1. Its function is as follows. Catalyzes a salvage reaction resulting in the formation of AMP, that is energically less costly than de novo synthesis. In Malacoplasma penetrans (strain HF-2) (Mycoplasma penetrans), this protein is Adenine phosphoribosyltransferase.